A 98-amino-acid chain; its full sequence is Integration host factor subunit alpha (98 aa).

The span at aspartate 53–glutamate 69 shows a compositional bias: basic and acidic residues. The interval aspartate 53 to isoleucine 73 is disordered.

Belongs to the bacterial histone-like protein family. In terms of assembly, heterodimer of an alpha and a beta chain.

Its function is as follows. This protein is one of the two subunits of integration host factor, a specific DNA-binding protein that functions in genetic recombination as well as in transcriptional and translational control. This chain is Integration host factor subunit alpha, found in Aliivibrio salmonicida (strain LFI1238) (Vibrio salmonicida (strain LFI1238)).